A 349-amino-acid chain; its full sequence is Aminomethyltransferase (349 aa).

This sequence belongs to the GcvT family. In terms of assembly, the glycine cleavage system is composed of four proteins: P, T, L and H.

It catalyses the reaction N(6)-[(R)-S(8)-aminomethyldihydrolipoyl]-L-lysyl-[protein] + (6S)-5,6,7,8-tetrahydrofolate = N(6)-[(R)-dihydrolipoyl]-L-lysyl-[protein] + (6R)-5,10-methylene-5,6,7,8-tetrahydrofolate + NH4(+). In terms of biological role, the glycine cleavage system catalyzes the degradation of glycine. The protein is Aminomethyltransferase of Thermus thermophilus (strain ATCC BAA-163 / DSM 7039 / HB27).